Reading from the N-terminus, the 980-residue chain is Putative leucine-rich repeat receptor-like serine/threonine-protein kinase At2g24130 (980 aa).

Residues 1-20 (MDYCSLLVVSFLITVMTVLA) form the signal peptide. At 21-593 (SKENDHELIK…ACKKKHKYPS (573 aa)) the chain is on the extracellular side. N-linked (GlcNAc...) asparagine glycans are attached at residues asparagine 55 and asparagine 88. 8 LRR repeats span residues 65 to 89 (STQV…IANL), 90 to 113 (TGLT…IGSL), 115 to 138 (ETLK…LGLL), 139 to 162 (NRLV…LFCN), 165 to 189 (SSSL…YHCH), 191 to 214 (KELR…LSNS), 215 to 238 (TNLK…VISK), and 240 to 263 (PQLQ…NLEP). 4 N-linked (GlcNAc...) asparagine glycosylation sites follow: asparagine 152, asparagine 162, asparagine 175, and asparagine 213. Asparagine 257 and asparagine 270 each carry an N-linked (GlcNAc...) asparagine glycan. LRR repeat units follow at residues 271-295 (SSDL…VRHL), 296-320 (SVNL…ISNL), 322-344 (NLTL…LCKL), 345-370 (SKLE…DIPR), 372-391 (GLLD…SFGN), 392-416 (LSQL…LGKC), 417-440 (INLE…VVSN), 442-463 (RNLK…PLEL), 464-490 (SKMD…LGSC), 491-514 (IALE…LGQL), 515-537 (PYLK…SFQQ), and 539-563 (STLK…SFSK). Residues asparagine 322 and asparagine 327 are each glycosylated (N-linked (GlcNAc...) asparagine). Residues asparagine 380 and asparagine 391 are each glycosylated (N-linked (GlcNAc...) asparagine). Asparagine 428 and asparagine 449 each carry an N-linked (GlcNAc...) asparagine glycan. An N-linked (GlcNAc...) asparagine glycan is attached at asparagine 497. Residues asparagine 545 and asparagine 554 are each glycosylated (N-linked (GlcNAc...) asparagine). A helical transmembrane segment spans residues 594 to 614 (VLLPVLLSLIATPVLCVFGYP). At 615–980 (LVQRSRFGKN…SQETQGEASS (366 aa)) the chain is on the cytoplasmic side. A Phosphothreonine modification is found at threonine 658. In terms of domain architecture, Protein kinase spans 661–960 (FNASSLIGSG…HEMGRLKEYL (300 aa)). Residues 667-675 (IGSGRFGHV) and lysine 689 each bind ATP. Tyrosine 775 is subject to Phosphotyrosine. Catalysis depends on aspartate 788, which acts as the Proton acceptor. Tyrosine 841 bears the Phosphotyrosine mark.

The protein belongs to the protein kinase superfamily. Ser/Thr protein kinase family.

Its subcellular location is the cell membrane. The catalysed reaction is L-seryl-[protein] + ATP = O-phospho-L-seryl-[protein] + ADP + H(+). It catalyses the reaction L-threonyl-[protein] + ATP = O-phospho-L-threonyl-[protein] + ADP + H(+). This Arabidopsis thaliana (Mouse-ear cress) protein is Putative leucine-rich repeat receptor-like serine/threonine-protein kinase At2g24130.